We begin with the raw amino-acid sequence, 82 residues long: Omega-conotoxin PnVIB (82 aa).

The N-terminal stretch at 1–22 is a signal peptide; it reads MKLTCMMIVAVLFLTAWTVVTA. Residues 23 to 52 constitute a propeptide that is removed on maturation; it reads EPHSSNVLENLYLKAHHEMENPEASKLNTR. 3 cysteine pairs are disulfide-bonded: Cys-56-Cys-73, Cys-63-Cys-77, and Cys-72-Cys-81.

In terms of tissue distribution, expressed by the venom duct.

It is found in the secreted. Functionally, omega-conotoxins act at presynaptic membranes, they bind and block voltage-gated calcium channels (Cav). Acts on high voltage-activated (HVA) calcium currents in molluscan neurons. The sequence is that of Omega-conotoxin PnVIB from Conus pennaceus (Feathered cone).